The primary structure comprises 888 residues: CRISPR-associated endonuclease/helicase Cas3 (888 aa).

In terms of domain architecture, HD Cas3-type spans 20–231 (KGNDIHLLIY…AGFCSLADWL (212 aa)). Residues D75 and H160 each contribute to the Mg(2+) site. The Helicase ATP-binding domain occupies 301–504 (DALPVAPGLT…LDTYGLHTDP (204 aa)). 314-321 (APTGSGKT) lines the ATP pocket. Residues 452–455 (DEVH) carry the DEAH box motif. The Helicase C-terminal domain maps to 556-735 (MLERMIAAAN…AYRQWLDSIY (180 aa)).

The protein in the N-terminal section; belongs to the CRISPR-associated nuclease Cas3-HD family. In the central section; belongs to the CRISPR-associated helicase Cas3 family. Interacts with the CasA subunit of Cascade once Cascade has recognized target DNA. It depends on Mg(2+) as a cofactor.

Its function is as follows. CRISPR (clustered regularly interspaced short palindromic repeat), is an adaptive immune system that provides protection against mobile genetic elements (viruses, transposable elements and conjugative plasmids). CRISPR clusters contain sequences complementary to antecedent mobile elements and target invading nucleic acids. CRISPR clusters are transcribed and processed into CRISPR RNA (crRNA). Cas3 plus Cascade participate in CRISPR interference, the third stage of CRISPR immunity. In terms of biological role, acts as an endonuclease, a 3'-5'exonuclease, and an ATP-dependent dsDNA helicase. Anneals and unwinds R-loops (in which crRNA binds the target DNA, displacing the noncomplementary strand). Unwinding requires ATP, annealing does not. Required along with the Cascade complex for resistance to bacteriophage lambda infection as well as the ability to cure CRISPR-encoding high-copy number plasmid. A Cas3-CasA fusion protein purified with the Cascade complex nicks target plasmid in the presence but not absence of Mg(2+), and degrades plasmid fully in the presence of Mg(2+) and ATP, suggesting the helicase activity is required for complete degradation. The protein is CRISPR-associated endonuclease/helicase Cas3 (ygcB) of Escherichia coli (strain K12).